The following is a 458-amino-acid chain: Probable ECA polymerase (458 aa).

11 helical membrane-spanning segments follow: residues 3-23, 37-57, 65-85, 112-132, 154-174, 180-200, 201-221, 222-242, 340-360, 377-397, and 409-429; these read LAQFGGLFVVYLIGTLFVLTL, VFFSLLYLLTFYFGFPLTCLL, VVPVEFLLYAILSATAFYAIY, THLTWILLALVAIVTVGIFFL, GVALKRFFYFFIPAMLVVYFL, AWFFFLAATVAFGILTYVIVG, GTRANIIIAFSLFLFIGIVRG, WISLWMLVAAGVFGIVGMFWL, LVVMGGALFIPVGAVLVGMII, YKAAILQGFCFGAVFNIIVLA, and VFFCLIFGVCLLMAKLLYWLF.

It belongs to the WzyE family. Probably part of a complex composed of WzxE, WzyE and WzzE.

Its subcellular location is the cell inner membrane. Its pathway is bacterial outer membrane biogenesis; enterobacterial common antigen biosynthesis. Its function is as follows. Probably involved in the polymerization of enterobacterial common antigen (ECA) trisaccharide repeat units. This Serratia proteamaculans (strain 568) protein is Probable ECA polymerase.